Here is a 78-residue protein sequence, read N- to C-terminus: Small ribosomal subunit protein uS17 (78 aa).

It belongs to the universal ribosomal protein uS17 family. In terms of assembly, part of the 30S ribosomal subunit.

Functionally, one of the primary rRNA binding proteins, it binds specifically to the 5'-end of 16S ribosomal RNA. In Sinorhizobium medicae (strain WSM419) (Ensifer medicae), this protein is Small ribosomal subunit protein uS17.